The primary structure comprises 371 residues: Putative RNA-binding protein Luc7-like 1 (371 aa).

2 coiled-coil regions span residues 87–177 and 218–259; these read MDHL…RNSM and FIQI…LSRR. Basic and acidic residues predominate over residues 232 to 257; the sequence is VAEKQEKRNQDRLRRREEREREERLS. The disordered stretch occupies residues 232–371; it reads VAEKQEKRNQ…RSEEKEAGEI (140 aa). Positions 258–317 are enriched in basic residues; sequence RRSGSRTRDRRRSRSRDRRRRRSRSTSRERRKLSRSRSRDRHRRHRSRSRSHSRGHRRAS. Basic and acidic residues-rich tracts occupy residues 318–351 and 361–371; these read RDRS…DWRL and RRSEEKEAGEI. Phosphoserine occurs at positions 332, 336, and 363.

It belongs to the Luc7 family. In terms of tissue distribution, ubiquitous.

In terms of biological role, may bind to RNA via its Arg/Ser-rich domain. The protein is Putative RNA-binding protein Luc7-like 1 (LUC7L) of Homo sapiens (Human).